Here is a 122-residue protein sequence, read N- to C-terminus: LYR motif-containing protein 1 (122 aa).

Belongs to the complex I LYR family. In terms of tissue distribution, high levels in adipose tissue.

It is found in the nucleus. In terms of biological role, may promote cell proliferation and inhibition of apoptosis of preadipocytes. This Homo sapiens (Human) protein is LYR motif-containing protein 1 (LYRM1).